The primary structure comprises 44 residues: Hyaluronidase CdtHya1 (44 aa).

The protein belongs to the glycosyl hydrolase 56 family. In terms of assembly, monomer. Post-translationally, contains disulfide bonds. In terms of processing, glycosylated. As to expression, expressed by the venom gland.

It localises to the secreted. It carries out the reaction Random hydrolysis of (1-&gt;4)-linkages between N-acetyl-beta-D-glucosamine and D-glucuronate residues in hyaluronate.. In terms of biological role, snake venom endo-hyaluronidase that degrades hyaluronan to smaller oligosaccharide fragments. In venom, it is not toxic by itself, but increases the diffusion of other venom proteins such as crotoxin (a neurotoxic and myotoxic PLA2) by degrading the extracellular matrix. In addition, it displays antiedematogenic activity, since it significantly diminishes the oedematogenic activity of crotoxin (probably by direct substrate hydrolysis, since hyaluronan possesses strong water-binding capacity). The chain is Hyaluronidase CdtHya1 from Crotalus durissus terrificus (South American rattlesnake).